Here is a 1393-residue protein sequence, read N- to C-terminus: DNA-directed RNA polymerase subunit beta' (1393 aa).

Cys-72, Cys-74, Cys-87, and Cys-90 together coordinate Zn(2+). 3 residues coordinate Mg(2+): Asp-463, Asp-465, and Asp-467. Zn(2+) is bound by residues Cys-812, Cys-887, Cys-894, and Cys-897.

The protein belongs to the RNA polymerase beta' chain family. In terms of assembly, the RNAP catalytic core consists of 2 alpha, 1 beta, 1 beta' and 1 omega subunit. When a sigma factor is associated with the core the holoenzyme is formed, which can initiate transcription. The cofactor is Mg(2+). Requires Zn(2+) as cofactor.

The catalysed reaction is RNA(n) + a ribonucleoside 5'-triphosphate = RNA(n+1) + diphosphate. Its function is as follows. DNA-dependent RNA polymerase catalyzes the transcription of DNA into RNA using the four ribonucleoside triphosphates as substrates. The sequence is that of DNA-directed RNA polymerase subunit beta' from Chlamydia abortus (strain DSM 27085 / S26/3) (Chlamydophila abortus).